The primary structure comprises 425 residues: Monoacylglycerol lipase ABHD2 (425 aa).

At 1-9 the chain is on the cytoplasmic side; that stretch reads MNAMLETPE. The chain crosses the membrane as a helical; Signal-anchor for type II membrane protein span at residues 10–30; that stretch reads LPAVFDGVKLAAVAAVLYVIV. Topologically, residues 31 to 425 are extracellular; the sequence is RCLNLKSPTA…DTEQMEAELE (395 aa). In terms of domain architecture, AB hydrolase-1 spans 128–382; the sequence is MVICPGIANH…HGGHLGFFEG (255 aa). An N-linked (GlcNAc...) asparagine glycan is attached at Asn136. The active-site Nucleophile is the Ser207. Catalysis depends on charge relay system residues Asp345 and His376. Asn410 is a glycosylation site (N-linked (GlcNAc...) asparagine).

It belongs to the AB hydrolase superfamily. AB hydrolase 4 family. Widely expressed with higher expression in testis. Expressed by vascular smooth muscle cells, non vascular smooth muscle cells and heart.

It localises to the cell membrane. It is found in the cytoplasmic vesicle. The protein localises to the secretory vesicle. The protein resides in the acrosome membrane. The enzyme catalyses Hydrolyzes glycerol monoesters of long-chain fatty acids.. The catalysed reaction is an acetyl ester + H2O = an aliphatic alcohol + acetate + H(+). It catalyses the reaction a triacylglycerol + H2O = a diacylglycerol + a fatty acid + H(+). It carries out the reaction 2-(5Z,8Z,11Z,14Z-eicosatetraenoyl)-glycerol + H2O = glycerol + (5Z,8Z,11Z,14Z)-eicosatetraenoate + H(+). The enzyme catalyses a butanoate ester + H2O = an aliphatic alcohol + butanoate + H(+). The catalysed reaction is hexadecanoate ester + H2O = an aliphatic alcohol + hexadecanoate + H(+). Acylglycerol lipase activity is activated upon binding to progesterone. Progesterone-dependent acylglycerol lipase that catalyzes hydrolysis of endocannabinoid arachidonoylglycerol (AG) from cell membrane. Acts as a progesterone receptor: progesterone-binding activates the acylglycerol lipase activity, mediating degradation of 1-arachidonoylglycerol (1AG) and 2-arachidonoylglycerol (2AG) to glycerol and arachidonic acid (AA). Also displays an ester hydrolase activity against acetyl ester, butanoate ester and hexadecanoate ester. Plays a key role in sperm capacitation in response to progesterone by mediating degradation of 2AG, an inhibitor of the sperm calcium channel CatSper, leading to calcium influx via CatSper and sperm activation. Involved in acrosomal reaction. May also play a role in smooth muscle cells migration. This Mus musculus (Mouse) protein is Monoacylglycerol lipase ABHD2 (Abhd2).